Consider the following 262-residue polypeptide: Octanoyltransferase (262 aa).

The region spanning 60 to 248 (GTADELVWLV…AFEMVFGPTR (189 aa)) is the BPL/LPL catalytic domain. Residues 99 to 106 (RGGEYTYH), 179 to 181 (AIG), and 192 to 194 (GLS) contribute to the substrate site. Cys-210 functions as the Acyl-thioester intermediate in the catalytic mechanism.

The protein belongs to the LipB family.

It localises to the cytoplasm. It carries out the reaction octanoyl-[ACP] + L-lysyl-[protein] = N(6)-octanoyl-L-lysyl-[protein] + holo-[ACP] + H(+). Its pathway is protein modification; protein lipoylation via endogenous pathway; protein N(6)-(lipoyl)lysine from octanoyl-[acyl-carrier-protein]: step 1/2. In terms of biological role, catalyzes the transfer of endogenously produced octanoic acid from octanoyl-acyl-carrier-protein onto the lipoyl domains of lipoate-dependent enzymes. Lipoyl-ACP can also act as a substrate although octanoyl-ACP is likely to be the physiological substrate. In Sinorhizobium medicae (strain WSM419) (Ensifer medicae), this protein is Octanoyltransferase.